A 118-amino-acid polypeptide reads, in one-letter code: Small ribosomal subunit protein uS13 (118 aa).

The interval 94–118 (SLPLRGQRTKTNARTRKGPRKPIRK) is disordered.

It belongs to the universal ribosomal protein uS13 family. In terms of assembly, part of the 30S ribosomal subunit. Forms a loose heterodimer with protein S19. Forms two bridges to the 50S subunit in the 70S ribosome.

Functionally, located at the top of the head of the 30S subunit, it contacts several helices of the 16S rRNA. In the 70S ribosome it contacts the 23S rRNA (bridge B1a) and protein L5 of the 50S subunit (bridge B1b), connecting the 2 subunits; these bridges are implicated in subunit movement. Contacts the tRNAs in the A and P-sites. The protein is Small ribosomal subunit protein uS13 of Shewanella baltica (strain OS223).